The sequence spans 466 residues: tRNA-2-methylthio-N(6)-dimethylallyladenosine synthase (466 aa).

The MTTase N-terminal domain maps to 3–123; sequence KKLYIKTYGC…LPEMVARAVR (121 aa). [4Fe-4S] cluster is bound by residues Cys12, Cys48, Cys86, Cys162, Cys166, and Cys169. In terms of domain architecture, Radical SAM core spans 148-381; it reads SPAGPSAFLS…QQLLTAQQTA (234 aa). Residues 384–446 form the TRAM domain; it reads TACVGRVQPV…ANSLSGTVVV (63 aa).

It belongs to the methylthiotransferase family. MiaB subfamily. In terms of assembly, monomer. The cofactor is [4Fe-4S] cluster.

The protein localises to the cytoplasm. It catalyses the reaction N(6)-dimethylallyladenosine(37) in tRNA + (sulfur carrier)-SH + AH2 + 2 S-adenosyl-L-methionine = 2-methylsulfanyl-N(6)-dimethylallyladenosine(37) in tRNA + (sulfur carrier)-H + 5'-deoxyadenosine + L-methionine + A + S-adenosyl-L-homocysteine + 2 H(+). Functionally, catalyzes the methylthiolation of N6-(dimethylallyl)adenosine (i(6)A), leading to the formation of 2-methylthio-N6-(dimethylallyl)adenosine (ms(2)i(6)A) at position 37 in tRNAs that read codons beginning with uridine. In Rhodospirillum centenum (strain ATCC 51521 / SW), this protein is tRNA-2-methylthio-N(6)-dimethylallyladenosine synthase.